A 127-amino-acid chain; its full sequence is Calcitonin gene-related peptide 2 (127 aa).

The first 25 residues, 1–25 (MGFRKFSPFLALSILVLYQAGSLQA), serve as a signal peptide directing secretion. Positions 26–79 (APFRSALESSPDPATLSKEDARLLLAALVQDYVQMKASELKQEQETQGSSSAAQ) are excised as a propeptide. An intrachain disulfide couples Cys-83 to Cys-88. Phe-118 carries the phenylalanine amide modification. A propeptide spanning residues 124-127 (DLQA) is cleaved from the precursor.

The protein belongs to the calcitonin family. Expressed in spinal cord, pituitary and thalamus.

The protein localises to the secreted. Its function is as follows. CALCB/CGRP2 is a peptide hormone that induces vasodilation mediated by the CALCRL-RAMP1 receptor complex. Dilates a variety of vessels including the coronary, cerebral and systemic vasculature. Its abundance in the CNS also points toward a neurotransmitter or neuromodulator role. This chain is Calcitonin gene-related peptide 2, found in Homo sapiens (Human).